We begin with the raw amino-acid sequence, 226 residues long: 6-carboxyhexanoate--CoA ligase (226 aa).

This sequence belongs to the BioW family. Homodimer. The cofactor is Mg(2+).

It carries out the reaction heptanedioate + ATP + CoA = 6-carboxyhexanoyl-CoA + AMP + diphosphate. It participates in metabolic intermediate metabolism; pimeloyl-CoA biosynthesis; pimeloyl-CoA from pimelate: step 1/1. In terms of biological role, catalyzes the transformation of pimelate into pimeloyl-CoA with concomitant hydrolysis of ATP to AMP. The chain is 6-carboxyhexanoate--CoA ligase from Methanocaldococcus infernus (strain DSM 11812 / JCM 15783 / ME).